Here is an 81-residue protein sequence, read N- to C-terminus: Protein translocase subunit SecE (81 aa).

Residues 50–70 (VAVILMVILVSTVIYFVDQIF) form a helical membrane-spanning segment.

It belongs to the SecE/SEC61-gamma family. Component of the Sec protein translocase complex. Heterotrimer consisting of SecY, SecE and SecG subunits. The heterotrimers can form oligomers, although 1 heterotrimer is thought to be able to translocate proteins. Interacts with the ribosome. Interacts with SecDF, and other proteins may be involved. Interacts with SecA.

The protein localises to the cell inner membrane. Its subcellular location is the cellular thylakoid membrane. Its function is as follows. Essential subunit of the Sec protein translocation channel SecYEG. Clamps together the 2 halves of SecY. May contact the channel plug during translocation. In Synechocystis sp. (strain ATCC 27184 / PCC 6803 / Kazusa), this protein is Protein translocase subunit SecE.